The chain runs to 269 residues: Hydroxyethylthiazole kinase (269 aa).

Met45 contributes to the substrate binding site. Residues Arg121 and Thr167 each contribute to the ATP site. Substrate is bound at residue Gly194.

The protein belongs to the Thz kinase family. It depends on Mg(2+) as a cofactor.

It catalyses the reaction 5-(2-hydroxyethyl)-4-methylthiazole + ATP = 4-methyl-5-(2-phosphooxyethyl)-thiazole + ADP + H(+). Its pathway is cofactor biosynthesis; thiamine diphosphate biosynthesis; 4-methyl-5-(2-phosphoethyl)-thiazole from 5-(2-hydroxyethyl)-4-methylthiazole: step 1/1. In terms of biological role, catalyzes the phosphorylation of the hydroxyl group of 4-methyl-5-beta-hydroxyethylthiazole (THZ). The protein is Hydroxyethylthiazole kinase of Bacillus cytotoxicus (strain DSM 22905 / CIP 110041 / 391-98 / NVH 391-98).